We begin with the raw amino-acid sequence, 577 residues long: Arginine--tRNA ligase (577 aa).

A 'HIGH' region motif is present at residues 124 to 132 (VAKEMHVGH).

The protein belongs to the class-I aminoacyl-tRNA synthetase family. As to quaternary structure, monomer.

The protein localises to the cytoplasm. It catalyses the reaction tRNA(Arg) + L-arginine + ATP = L-arginyl-tRNA(Arg) + AMP + diphosphate. This Salmonella typhi protein is Arginine--tRNA ligase.